Reading from the N-terminus, the 433-residue chain is MSKIVKVIGREIIDSRGNPTVEAEVHLEGGFVGMAAAPSGASTGSREALELRDGDKSRFLGKGVLKAVSAVNGPIAEVIIGKDAKDQANIDQIMIELDGTENKSKFGANAILAVSLANAKAAAAAKGMPLYAHIAELNGTPGKYSMPLPMMNIINGGEHADNNVDIQEFMIQPVGAKTLKEAVRIGSEVFHNLAKVLKSKGMNTAVGDEGGYAPNLESNAAALAAIKEAVEKAGYVLGKDVTLAMDCAASEFYNKETGMYELKGEGKSFTSNEFTHYLEGLTKEYPIVSIEDGLDESDWDGFAYQTKVMGGKLQLVGDDLFVTNTKILKEGIEKGIANSILIKFNQIGSLTETLAAIKMAKDAGYTAVISHRSGETEDATIADLAVGTAAGQIKTGSMSRSDRVAKYNQLIRIEEALGAAAPFNGLKEVKGQH.

Gln-167 contributes to the (2R)-2-phosphoglycerate binding site. Glu-209 acts as the Proton donor in catalysis. Mg(2+)-binding residues include Asp-246, Glu-291, and Asp-318. Positions 343, 372, 373, and 394 each coordinate (2R)-2-phosphoglycerate. Lys-343 acts as the Proton acceptor in catalysis.

The protein belongs to the enolase family. In terms of assembly, component of the RNA degradosome, a multiprotein complex involved in RNA processing and mRNA degradation. The cofactor is Mg(2+).

It is found in the cytoplasm. Its subcellular location is the secreted. It localises to the cell surface. It carries out the reaction (2R)-2-phosphoglycerate = phosphoenolpyruvate + H2O. The protein operates within carbohydrate degradation; glycolysis; pyruvate from D-glyceraldehyde 3-phosphate: step 4/5. Functionally, catalyzes the reversible conversion of 2-phosphoglycerate (2-PG) into phosphoenolpyruvate (PEP). It is essential for the degradation of carbohydrates via glycolysis. The chain is Enolase from Edwardsiella ictaluri (strain 93-146).